Reading from the N-terminus, the 323-residue chain is Phospho-N-acetylmuramoyl-pentapeptide-transferase (323 aa).

9 consecutive transmembrane segments (helical) span residues 5-25, 57-77, 81-101, 118-138, 140-160, 173-193, 196-216, 225-247, and 302-322; these read SAVLTILSSFLITFLLMPSLI, LLFIFSAVVTILWVAAWQGLI, LWALLFVLVVYGLIGMWDDSI, LCQVLAAMVFTVIYQHEGFQM, FGTTQIGWLYGLFIIFWIVGF, LVSGLSIISFAAYLIIALVNL, PGYPEIALFCLAMIGTLLGFF, IFMGDMGSLAIGASLAAVSLLLH, and IVFWLVGLVAAIIAVTTILLV.

It belongs to the glycosyltransferase 4 family. MraY subfamily. Mg(2+) is required as a cofactor.

The protein localises to the cell membrane. The catalysed reaction is UDP-N-acetyl-alpha-D-muramoyl-L-alanyl-gamma-D-glutamyl-L-lysyl-D-alanyl-D-alanine + di-trans,octa-cis-undecaprenyl phosphate = Mur2Ac(oyl-L-Ala-gamma-D-Glu-L-Lys-D-Ala-D-Ala)-di-trans,octa-cis-undecaprenyl diphosphate + UMP. Its pathway is cell wall biogenesis; peptidoglycan biosynthesis. Its function is as follows. Catalyzes the initial step of the lipid cycle reactions in the biosynthesis of the cell wall peptidoglycan: transfers peptidoglycan precursor phospho-MurNAc-pentapeptide from UDP-MurNAc-pentapeptide onto the lipid carrier undecaprenyl phosphate, yielding undecaprenyl-pyrophosphoryl-MurNAc-pentapeptide, known as lipid I. The chain is Phospho-N-acetylmuramoyl-pentapeptide-transferase from Limosilactobacillus reuteri (strain DSM 20016) (Lactobacillus reuteri).